The primary structure comprises 283 residues: MAVPPTYADLGKSARDVFTKGYGFGLIKLDLKTKSENGLEFTSSGSANTETTKVTGSLETKYRWTEYGLTFTEKWNTDNTLGTEITVEDQLARGLKLTFDSSFSPNTGKKNAKIKTGYKREHINLGCDMDFDIAGPSIRGALVLGYEGWLAGYQMNFETAKSRVTQSNFAVGYKTDEFQLHTNVNDGTEFGGSIYQKVNKKLETAVNLAWTAGNSNTRFGIAAKYQIDPDACFSAKVNNSSLIGLGYTQTLKPGIKLTLSALLDGKNVNAGGHKLGLGLEFQA.

At A2 the chain carries N-acetylalanine. K12 contacts ATP. A Glycyl lysine isopeptide (Lys-Gly) (interchain with G-Cter in ubiquitin) cross-link involves residue K12. S13 bears the Phosphoserine mark. Residue T19 is modified to Phosphothreonine. Position 20 (K20) interacts with ATP. K20 carries the post-translational modification N6-acetyllysine; alternate. The residue at position 20 (K20) is an N6-succinyllysine; alternate. K20 participates in a covalent cross-link: Glycyl lysine isopeptide (Lys-Gly) (interchain with G-Cter in ubiquitin); alternate. Transmembrane regions (beta stranded) follow at residues 26 to 35 (LIKLDLKTKS) and 39 to 47 (LEFTSSGSA). Residues K53 and K61 each participate in a glycyl lysine isopeptide (Lys-Gly) (interchain with G-Cter in ubiquitin) cross-link. A beta stranded transmembrane segment spans residues 54–64 (VTGSLETKYRW). Y67 bears the Phosphotyrosine mark. 3 beta stranded membrane-spanning segments follow: residues 69–76 (LTFTEKWN), 80–89 (TLGTEITVED), and 95–104 (LKLTFDSSFS). A Phosphothreonine modification is found at T107. K109 carries the N6-acetyllysine; alternate modification. K109 is covalently cross-linked (Glycyl lysine isopeptide (Lys-Gly) (interchain with G-Cter in ubiquitin); alternate). A Glycyl lysine isopeptide (Lys-Gly) (interchain with G-Cter in ubiquitin) cross-link involves residue K110. Beta stranded transmembrane passes span 111–120 (NAKIKTGYKR), 123–130 (INLGCDMD), 137–145 (SIRGALVLG), and 150–158 (LAGYQMNFE). Residue K161 forms a Glycyl lysine isopeptide (Lys-Gly) (interchain with G-Cter in ubiquitin) linkage. A run of 6 beta stranded transmembrane segments spans residues 163–175 (RVTQSNFAVGYKT), 178–185 (FQLHTNVN), 189–198 (EFGGSIYQKV), 202–211 (LETAVNLAWT), 218–227 (RFGIAAKYQI), and 231–238 (ACFSAKVN). A Phosphoserine; by NEK1 modification is found at S193. Residue S240 is modified to Phosphoserine. 242–244 (LIG) contacts NAD(+). A beta stranded transmembrane segment spans residues 242-251 (LIGLGYTQTL). K252 carries the post-translational modification N6-acetyllysine. Residues 254–263 (GIKLTLSALL) form a beta stranded membrane-spanning segment. 260–264 (SALLD) provides a ligand contact to NAD(+). An N6-acetyllysine; alternate modification is found at K266. K266 is covalently cross-linked (Glycyl lysine isopeptide (Lys-Gly) (interchain with G-Cter in ubiquitin); alternate). Residues 273–282 (HKLGLGLEFQ) traverse the membrane as a beta stranded segment. Residue K274 forms a Glycyl lysine isopeptide (Lys-Gly) (interchain with G-Cter in ubiquitin) linkage.

The protein belongs to the eukaryotic mitochondrial porin family. Homodimer and homotrimer; in response to cyclic AMP or calcium; oligomerization is required for scramblase activity. Component of the mitochondrial permeability transition pore complex (mPTPC), at least composed of SPG7, VDAC1 and PPIF. Interacts with SPG7, NIPSNAP2 and SLC25A30. Interacts with hexokinases including HK1. The HK1-VDAC1 complex interacts with ATF2. Interacts with BCL2L1. Interacts with BAK1. Interacts with RTL10/BOP (via BH3 domain). Interacts with amyloid-beta and APP; induces VDAC1 dephosphorylation. Interacts with TMEM41B. Interacts with BCAP31. Interacts with HSPA9; this interaction couples ITPR1 to VDAC1. As to quaternary structure, (Microbial infection) Interacts with influenza A virus PB1-F2 protein. Post-translationally, phosphorylation at Ser-193 by NEK1 promotes the closed conformational state preventing excessive mitochondrial membrane permeability and subsequent apoptotic cell death after injury. Phosphorylation by the AKT-GSK3B axis stabilizes the protein probably by preventing ubiquitin-mediated proteasomal degradation. In terms of processing, ubiquitinated. Undergoes monoubiquitination and polyubiquitination by PRKN; monoubiquitination at Lys-274 inhibits apoptosis, whereas polyubiquitination leads to its degradation and promotes mitophagy. Deubiquitinated by USP30. Expressed in erythrocytes (at protein level). Expressed in heart, liver and skeletal muscle.

It is found in the mitochondrion outer membrane. Its subcellular location is the cell membrane. The protein localises to the membrane raft. It carries out the reaction chloride(in) = chloride(out). The enzyme catalyses K(+)(in) = K(+)(out). It catalyses the reaction ATP(in) = ATP(out). The catalysed reaction is Ca(2+)(in) = Ca(2+)(out). It carries out the reaction Na(+)(in) = Na(+)(out). The enzyme catalyses Mg(2+)(in) = Mg(2+)(out). It catalyses the reaction L-glutamate(out) = L-glutamate(in). The catalysed reaction is dopamine(out) = dopamine(in). It carries out the reaction acetylcholine(in) = acetylcholine(out). The enzyme catalyses Fe(III)-[cytochrome c](out) = Fe(III)-[cytochrome c](in). It catalyses the reaction a 1,2-diacyl-sn-glycero-3-phosphocholine(in) = a 1,2-diacyl-sn-glycero-3-phosphocholine(out). The catalysed reaction is a 1,2-diacyl-sn-glycero-3-phospho-L-serine(in) = a 1,2-diacyl-sn-glycero-3-phospho-L-serine(out). With respect to regulation, inhibited by nitric oxide. Functionally, non-selective voltage-gated ion channel that mediates the transport of anions and cations through the mitochondrion outer membrane and plasma membrane. The channel at the outer mitochondrial membrane allows diffusion of small hydrophilic molecules; in the plasma membrane it is involved in cell volume regulation and apoptosis. It adopts an open conformation at low or zero membrane potential and a closed conformation at potentials above 30-40 mV. The open state has a weak anion selectivity whereas the closed state is cation-selective. Binds various signaling molecules, including the sphingolipid ceramide, the phospholipid phosphatidylcholine, and the sterols cholesterol and oxysterol. In depolarized mitochondria, acts downstream of PRKN and PINK1 to promote mitophagy or prevent apoptosis; polyubiquitination by PRKN promotes mitophagy, while monoubiquitination by PRKN decreases mitochondrial calcium influx which ultimately inhibits apoptosis. May participate in the formation of the permeability transition pore complex (PTPC) responsible for the release of mitochondrial products that triggers apoptosis. May mediate ATP export from cells. Part of a complex composed of HSPA9, ITPR1 and VDAC1 that regulates mitochondrial calcium-dependent apoptosis by facilitating calcium transport from the ER lumen to the mitochondria intermembrane space thus providing calcium for the downstream calcium channel MCU that directly releases it into mitochondria matrix. Mediates cytochrome c efflux. Catalyzes the scrambling of phospholipids across the outer mitochondrial membrane; the mechanism is unrelated to channel activity and is capable of translocating both anionic and zwitterionic phospholipids. This is Non-selective voltage-gated ion channel VDAC1 from Homo sapiens (Human).